The sequence spans 245 residues: PF03932 family protein CutC (245 aa).

The protein belongs to the CutC family.

The protein resides in the cytoplasm. The polypeptide is PF03932 family protein CutC (Rhizobium meliloti (strain 1021) (Ensifer meliloti)).